A 136-amino-acid chain; its full sequence is ATP synthase epsilon chain, chloroplastic (136 aa).

It belongs to the ATPase epsilon chain family. As to quaternary structure, F-type ATPases have 2 components, CF(1) - the catalytic core - and CF(0) - the membrane proton channel. CF(1) has five subunits: alpha(3), beta(3), gamma(1), delta(1), epsilon(1). CF(0) has three main subunits: a, b and c.

The protein resides in the plastid. Its subcellular location is the chloroplast thylakoid membrane. Its function is as follows. Produces ATP from ADP in the presence of a proton gradient across the membrane. The protein is ATP synthase epsilon chain, chloroplastic of Cucumis sativus (Cucumber).